The chain runs to 287 residues: Polyamine aminopropyltransferase (287 aa).

In terms of domain architecture, PABS spans 5–238 (EIWYETLHAN…GIMTFAWASQ (234 aa)). Glutamine 33 lines the S-methyl-5'-thioadenosine pocket. Residues histidine 64 and aspartate 88 each coordinate spermidine. S-methyl-5'-thioadenosine is bound by residues glutamate 108 and 140-141 (DG). Aspartate 158 functions as the Proton acceptor in the catalytic mechanism. 158-161 (DCTD) provides a ligand contact to spermidine. Residue proline 165 participates in S-methyl-5'-thioadenosine binding.

The protein belongs to the spermidine/spermine synthase family. As to quaternary structure, homodimer or homotetramer.

It localises to the cytoplasm. The catalysed reaction is S-adenosyl 3-(methylsulfanyl)propylamine + putrescine = S-methyl-5'-thioadenosine + spermidine + H(+). It functions in the pathway amine and polyamine biosynthesis; spermidine biosynthesis; spermidine from putrescine: step 1/1. Functionally, catalyzes the irreversible transfer of a propylamine group from the amino donor S-adenosylmethioninamine (decarboxy-AdoMet) to putrescine (1,4-diaminobutane) to yield spermidine. The chain is Polyamine aminopropyltransferase from Serratia proteamaculans (strain 568).